The chain runs to 104 residues: Replication restart protein PriB (104 aa).

Positions 1–101 (MTNRLVLSGT…LHAEQIELID (101 aa)) constitute an SSB domain.

The protein belongs to the PriB family. Homodimer. Interacts with PriA and DnaT. Component of the replication restart primosome. Primosome assembly occurs via a 'hand-off' mechanism. PriA binds to replication forks, subsequently PriB then DnaT bind; DnaT then displaces ssDNA to generate the helicase loading substrate.

In terms of biological role, involved in the restart of stalled replication forks, which reloads the replicative helicase on sites other than the origin of replication; the PriA-PriB pathway is the major replication restart pathway. During primosome assembly it facilitates complex formation between PriA and DnaT on DNA; stabilizes PriA on DNA. Stimulates the DNA unwinding activity of PriA helicase. This Shigella dysenteriae serotype 1 (strain Sd197) protein is Replication restart protein PriB.